Consider the following 543-residue polypeptide: Hydroxylamine reductase (543 aa).

Positions 3, 6, 15, and 21 each coordinate [4Fe-4S] cluster. Hybrid [4Fe-2O-2S] cluster contacts are provided by His-244, Glu-268, Cys-312, Cys-399, Cys-427, Cys-452, Glu-486, and Lys-488. Position 399 is a cysteine persulfide (Cys-399).

This sequence belongs to the HCP family. [4Fe-4S] cluster is required as a cofactor. The cofactor is hybrid [4Fe-2O-2S] cluster.

Its subcellular location is the cytoplasm. The catalysed reaction is A + NH4(+) + H2O = hydroxylamine + AH2 + H(+). Catalyzes the reduction of hydroxylamine to form NH(3) and H(2)O. The sequence is that of Hydroxylamine reductase from Methanocella arvoryzae (strain DSM 22066 / NBRC 105507 / MRE50).